The sequence spans 130 residues: MAATVKKTGSKKSKRNVPNGVVHIQSTFNNTIVSITDTSGHVISWSSAGASGFKGARKGTPFAAQTAAEAAARRALDQGMRQIEVLVRGPGAGRETAIRALQVAGLEITLIRDVTPLPHNGCRRPKRRRV.

Belongs to the universal ribosomal protein uS11 family. As to quaternary structure, part of the 30S ribosomal subunit. Interacts with proteins S7 and S18. Binds to IF-3.

In terms of biological role, located on the platform of the 30S subunit, it bridges several disparate RNA helices of the 16S rRNA. Forms part of the Shine-Dalgarno cleft in the 70S ribosome. In Prochlorococcus marinus (strain AS9601), this protein is Small ribosomal subunit protein uS11.